Reading from the N-terminus, the 652-residue chain is MSQIHKHAIPANIADRCLINPEQYEAKYQQSINEPDTFWGEQGKILDWITPYKKVKNTSFAPGNVSIKWYEDGTLNLAANCLDRHLQENGDRTAIIWEGDDATQSKHISYRELHRDVCRFANTLLELGIKKGDVVAIYMPMVPEAAVAMLACARIGAVHSVIFGGFSPEAVAGRIIDSSSRLVITADEGVRAGRGIPLKKNVDDALKNPNVNSVEHVVVLKRTGGKVDWHEGRDLWWSDVIEKSSADHQPEEMNAEDPLFILYTSGSTGKPKGVLHTTGGYLVYAATTFKYVFDYHPDDIYWCTADVGWVTGHSYLLYGPLACGATTLMFEGVPNWPTPARMAQVVDKHQVTILYTAPTAIRALMAEGDKAIEGTDRSSLRILGSVGEPINPEAWEWYWKKIGNEKCPVVDTWWQTETGGFMITPLPGATELKAGSATRPFFGVQPALVDNEGHPQEGATEGNLVITDSWPGQARTLFGDHERFEQTYFSTFKNMYFSGDGARRDEDGYYWITGRVDDVLNVSGHRLGTAEIESALVSHPKIAEAAVVGIPHNIKGQAIYAYVTLNHGEDPSPELYTEVRNWVRKEIGPLATPDVLHWTDSLPKTRSGKIMRRILRKIAAGDTSNLGDTSTLADPGVVEKLLEEKQAIAMPS.

Residues 191-194 (RAGR), Thr311, and Asn335 each bind CoA. ATP contacts are provided by residues 387-389 (GEP), 411-416 (DTWWQT), Asp500, and Arg515. Ser523 contacts CoA. An ATP-binding site is contributed by Arg526. Val537, His539, and Ile542 together coordinate Mg(2+). Arg584 serves as a coordination point for CoA. Position 609 is an N6-acetyllysine (Lys609).

Belongs to the ATP-dependent AMP-binding enzyme family. The cofactor is Mg(2+). In terms of processing, acetylated. Deacetylation by the SIR2-homolog deacetylase activates the enzyme.

The enzyme catalyses acetate + ATP + CoA = acetyl-CoA + AMP + diphosphate. Functionally, catalyzes the conversion of acetate into acetyl-CoA (AcCoA), an essential intermediate at the junction of anabolic and catabolic pathways. Acs undergoes a two-step reaction. In the first half reaction, Acs combines acetate with ATP to form acetyl-adenylate (AcAMP) intermediate. In the second half reaction, it can then transfer the acetyl group from AcAMP to the sulfhydryl group of CoA, forming the product AcCoA. Its function is as follows. Enables the cell to use acetate during aerobic growth to generate energy via the TCA cycle, and biosynthetic compounds via the glyoxylate shunt. Acetylates CheY, the response regulator involved in flagellar movement and chemotaxis. The polypeptide is Acetyl-coenzyme A synthetase (Citrobacter koseri (strain ATCC BAA-895 / CDC 4225-83 / SGSC4696)).